The primary structure comprises 129 residues: Small ribosomal subunit protein uS11 (129 aa).

This sequence belongs to the universal ribosomal protein uS11 family. As to quaternary structure, part of the 30S ribosomal subunit. Interacts with proteins S7 and S18. Binds to IF-3.

In terms of biological role, located on the platform of the 30S subunit, it bridges several disparate RNA helices of the 16S rRNA. Forms part of the Shine-Dalgarno cleft in the 70S ribosome. The polypeptide is Small ribosomal subunit protein uS11 (Geobacillus thermodenitrificans (strain NG80-2)).